A 177-amino-acid chain; its full sequence is Transcription antitermination protein NusB (177 aa).

The interval 1–35 (MTDSTHPTPSARPPRQPRTGTTGTGARKAGSKSGR) is disordered. Positions 17 to 28 (PRTGTTGTGARK) are enriched in low complexity.

The protein belongs to the NusB family.

Functionally, involved in transcription antitermination. Required for transcription of ribosomal RNA (rRNA) genes. Binds specifically to the boxA antiterminator sequence of the ribosomal RNA (rrn) operons. This is Transcription antitermination protein NusB from Acidovorax sp. (strain JS42).